We begin with the raw amino-acid sequence, 2844 residues long: Sodium channel protein 60E (2844 aa).

The Cytoplasmic portion of the chain corresponds to 1–121 (MSDDQATFND…WSPARRVCVY (121 aa)). Residues 107–434 (FLFYPWSPAR…FDPSVLNVKK (328 aa)) form an I repeat. A helical membrane pass occupies residues 122-145 (IATNQFFDYCVMATILFNCIFLAM). Residues 146 to 151 (TETVEE) are Extracellular-facing. The chain crosses the membrane as a helical span at residues 152–172 (AEYIFLAIYSIEMVIKIIAKG). The Cytoplasmic portion of the chain corresponds to 173 to 183 (FLLNKYTYLRN). Residues 184-202 (PWNWLDFVVITSGYATIGM) traverse the membrane as a helical segment. Residues 203–208 (EVGNLA) are Extracellular-facing. The helical; Voltage-sensor transmembrane segment at 209-228 (GLRTFRVLRALKTVSIMPGL) threads the bilayer. The Cytoplasmic portion of the chain corresponds to 229-244 (KTIINALLHSFRQLAE). The chain crosses the membrane as a helical span at residues 245-265 (VMTLTIFCLMVFALFALQVYM). Topologically, residues 266–340 (GELRNKCVRQ…PNHGYTNFDN (75 aa)) are extracellular. The cysteines at positions 272 and 318 are disulfide-linked. Asn-282, Asn-293, and Asn-311 each carry an N-linked (GlcNAc...) asparagine glycan. An intramembrane region (pore-forming) is located at residues 341–365 (FMWSMLTTFQLITLDYWENVYNMVL). At 366-374 (ATCGPMSVS) the chain is on the extracellular side. A helical transmembrane segment spans residues 375-395 (FFTVVVFFGSFYLINLMLAVV). Residues 396-687 (ALSYEEEAEI…QNCLYKVVRD (292 aa)) are Cytoplasmic-facing. The segment at 452–610 (ASYSKKKTRR…QDTTNDMGHV (159 aa)) is disordered. Positions 455 to 465 (SKKKTRRKKTK) are enriched in basic residues. Residues 469 to 479 (EGGTNGNGNGS) are compositionally biased toward gly residues. Low complexity-rich tracts occupy residues 511–520 (QAQKQYQQME) and 577–586 (SSNSSGVNRE). Residues 593–603 (GVVDDHEEQDT) show a composition bias toward acidic residues. Residues 668 to 1130 (CTDYESWLQF…ESIELLGQYN (463 aa)) form an II repeat. The helical transmembrane segment at 688–708 (PLFELAITLCIVLNTAFLAME) threads the bilayer. The Extracellular portion of the chain corresponds to 709-718 (HHGMSESFRN). The chain crosses the membrane as a helical span at residues 719 to 743 (ALDVGNKVFTSIFTFECIVKLMALS). Residues 744–749 (KDFFLC) lie on the Cytoplasmic side of the membrane. The helical transmembrane segment at 750–769 (GWNIFDLLIVTASLLDIIFE) threads the bilayer. The Extracellular portion of the chain corresponds to 770–775 (LVDGLS). Residues 776-795 (VLRGLRLLRVLKLAQSWTTM) traverse the membrane as a helical; Voltage-sensor segment. The Cytoplasmic segment spans residues 796 to 810 (KVLLSIIISTIGALG). A helical transmembrane segment spans residues 811–832 (NLTLILVIVIYIFAVIGMQLFS). Topologically, residues 833–852 (KDYTPEKFDPDPVPRWNFND) are extracellular. Residues 853 to 873 (FFHSFMMIFRILCGEWIEPLW) constitute an intramembrane region (pore-forming). The Extracellular portion of the chain corresponds to 874–889 (DCMRAEEEQGASTCFA). A disulfide bridge links Cys-875 with Cys-887. The helical transmembrane segment at 890–910 (IFLPTLVMGNFMVLNLFLALL) threads the bilayer. Residues 911–1742 (LNSFNSEELK…SAKHWTRVRT (832 aa)) are Cytoplasmic-facing. The segment covering 1129–1157 (YNSTDTDPYANDQRSGCGSFNRGDSLQDN) has biased composition (polar residues). Disordered stretches follow at residues 1129-1166 (YNST…GSEE), 1185-1224 (YRKS…NSMS), 1268-1288 (ISNV…ENET), 1577-1630 (APTP…ADAS), and 1635-1654 (LAMA…ATQK). Residues 1191–1203 (RLSQSSGQSQRSL) are compositionally biased toward low complexity. The segment covering 1204–1213 (LKSEEAEMRR) has biased composition (basic and acidic residues). Polar residues-rich tracts occupy residues 1277-1286 (PSSQMGQPEN), 1604-1618 (PQST…QSAR), and 1640-1654 (KTEQ…ATQK). The stretch at 1723-2040 (PWFMSCMDTQ…QKHYYTAMKK (318 aa)) is one III repeat. The chain crosses the membrane as a helical span at residues 1743–1763 (AVLTVVDTPAFEWFVLVLIFA). Topologically, residues 1764–1789 (SSITLCFEDINLDKNKTLKRVLYWIN) are extracellular. N-linked (GlcNAc...) asparagine glycosylation is found at Asn-1778 and Asn-1789. The chain crosses the membrane as a helical span at residues 1790–1810 (FSFCLIFVVEMILKWLALGFS). The Cytoplasmic portion of the chain corresponds to 1811-1813 (KYF). Residues 1814–1834 (TSFWTILDFIIVFVSVFSLLI) form a helical membrane-spanning segment. The Extracellular segment spans residues 1835-1839 (EENEN). Residues 1840-1861 (LKVLRSLRTLRALRPLRAISRW) traverse the membrane as a helical; Voltage-sensor segment. The Cytoplasmic segment spans residues 1862–1880 (QGMRIVVNALMYAIPSIFN). Residues 1881 to 1902 (VLLVCLVFWLIFSIMGVQFFGG) traverse the membrane as a helical segment. At 1903–1943 (KFFKCVNEMGELLPITEVNDKWDCIEQNYTWINSKITFDHV) the chain is on the extracellular side. Asn-1930 carries N-linked (GlcNAc...) asparagine glycosylation. Positions 1944-1965 (GMGYLALLQVATFEGWMEVMAD) form an intramembrane region, pore-forming. Over 1966 to 1981 (AVDARGVDLQPQREAN) the chain is Extracellular. Residues 1982-2002 (LYAYIYFVIFIVCGSFFTLNL) traverse the membrane as a helical segment. The Cytoplasmic portion of the chain corresponds to 2003 to 2069 (FIGVIIDNFN…MFYDLSNSRR (67 aa)). Residues 2050 to 2311 (IKRPINHFLA…NMYIAIILEN (262 aa)) form an IV repeat. Residues 2070–2090 (FEIAIFVLIFLNMLTMGIEHY) traverse the membrane as a helical segment. The Extracellular portion of the chain corresponds to 2091–2095 (DQPHA). The chain crosses the membrane as a helical span at residues 2096–2116 (VFFILEVSNAFFTTVFGLEAI). Residues 2117 to 2132 (VKIVGLRYHYFTVPWN) lie on the Cytoplasmic side of the membrane. A helical transmembrane segment spans residues 2133-2153 (VFDFLLVLASIFGILMEDIMI). At 2154–2162 (DLPISPTLL) the chain is on the extracellular side. Residues 2163–2184 (RVVRVFRIGRILRLIKAAKGIR) form a helical; Voltage-sensor membrane-spanning segment. Residues 2185 to 2199 (KLLFALVVSLPALFN) lie on the Cytoplasmic side of the membrane. A helical transmembrane segment spans residues 2200 to 2220 (IGALLGLITFIYAILGMSLFG). At 2221 to 2236 (NVKLQGALDDMVNFQT) the chain is on the extracellular side. Positions 2237 to 2259 (FGRSMQLLFRLMTSAGWNDVLES) form an intramembrane region, pore-forming. The Extracellular portion of the chain corresponds to 2260 to 2288 (LMIQPPDCDPFIHGHTNGNCGHPLLAITY). The chain crosses the membrane as a helical span at residues 2289-2309 (FTSFIIISYMIVINMYIAIIL). The Cytoplasmic portion of the chain corresponds to 2310 to 2844 (ENFNQAHQEE…QFESLPDRQR (535 aa)). Residues 2441–2470 (QEKAAKTIQTGWKEYLRRKREKERSNSGDS) form the IQ domain. Disordered stretches follow at residues 2457–2479 (RRKR…SPGG), 2584–2668 (SLTS…LSAQ), 2780–2802 (DSPK…GAPI), and 2818–2844 (NPEK…DRQR). Positions 2467-2479 (SGDSATQTSSPGG) are enriched in polar residues. Low complexity predominate over residues 2595–2632 (AMNNTTNTTSNSASTSGTASSTATAPATGCGPAATSAS). Residues 2647-2658 (SRKRASSFIRKK) show a composition bias toward basic residues. The segment covering 2825–2836 (DQGNGQDETAQF) has biased composition (polar residues).

The protein belongs to the sodium channel (TC 1.A.1.10) family. NaCP60E subfamily. In terms of tissue distribution, in embryonic and larval stages, expression is limited to very few non-neuronal cells in either the CNS or PNS. In pupal and adult stages, expressed in cell bodies of the fly central nervous system, including optic lobes, central brain, subesophageal ganglion, thoracico-abdominal ganglion, major olfactory organs, the third antennal segment and the maxillary palps.

Its subcellular location is the cell membrane. In terms of biological role, mediates the voltage-dependent sodium ion permeability of excitable membranes. Plays a role in processing of olfactory information during the olfactory avoidance response. The polypeptide is Sodium channel protein 60E (NaCP60E) (Drosophila melanogaster (Fruit fly)).